We begin with the raw amino-acid sequence, 208 residues long: Cysteine-rich protein 2 (208 aa).

The LIM zinc-binding 1 domain maps to 5-57 (CPKCDKTVYFAEKVSSLGKDWHKFCLKCERCSKTLTPGGHAEHDGKPFCHKPC). Lys23 bears the N6-acetyllysine mark. Residues 98 to 119 (AEERKASGPPKGPSRASSVTTF) form a disordered region. Ser104 is subject to Phosphoserine. An LIM zinc-binding 2 domain is found at 126 to 178 (CPRCSKKVYFAEKVTSLGKDWHRPCLRCERCGKTLTPGGHAEHDGQPYCHKPC). N6-acetyllysine is present on residues Lys138 and Lys144.

As to quaternary structure, interacts with TGFB1I1. As to expression, widespread tissue expression; highest levels in the heart.

In Homo sapiens (Human), this protein is Cysteine-rich protein 2 (CRIP2).